The chain runs to 100 residues: Large ribosomal subunit protein uL23 (100 aa).

This sequence belongs to the universal ribosomal protein uL23 family. As to quaternary structure, part of the 50S ribosomal subunit. Contacts protein L29, and trigger factor when it is bound to the ribosome.

Functionally, one of the early assembly proteins it binds 23S rRNA. One of the proteins that surrounds the polypeptide exit tunnel on the outside of the ribosome. Forms the main docking site for trigger factor binding to the ribosome. This is Large ribosomal subunit protein uL23 from Synechococcus elongatus (strain ATCC 33912 / PCC 7942 / FACHB-805) (Anacystis nidulans R2).